Reading from the N-terminus, the 295-residue chain is Acetylglutamate kinase (295 aa).

Substrate-binding positions include 70–71 (GG), arginine 92, and asparagine 191.

This sequence belongs to the acetylglutamate kinase family. ArgB subfamily.

Its subcellular location is the cytoplasm. It catalyses the reaction N-acetyl-L-glutamate + ATP = N-acetyl-L-glutamyl 5-phosphate + ADP. It participates in amino-acid biosynthesis; L-arginine biosynthesis; N(2)-acetyl-L-ornithine from L-glutamate: step 2/4. Its function is as follows. Catalyzes the ATP-dependent phosphorylation of N-acetyl-L-glutamate. This Mycobacterium avium (strain 104) protein is Acetylglutamate kinase.